The following is a 550-amino-acid chain: ATP-dependent RNA helicase MSS116, mitochondrial (550 aa).

The segment covering 1-11 (MPPPPKRKWPN) has biased composition (basic residues). A mitochondrion-targeting transit peptide spans 1–41 (MPPPPKRKWPNRPRGGGGANGSASGTPTTPRSTVAQQPKRP). The interval 1-51 (MPPPPKRKWPNRPRGGGGANGSASGTPTTPRSTVAQQPKRPKVEDAAPAAE) is disordered. The Q motif motif lies at 71–99 (FSELSSVLDKSLLDGLDKMGFEFMSPVQQ). The Helicase ATP-binding domain maps to 103–285 (TELPSLSSDC…KIVLFPGFTH (183 aa)). An ATP-binding site is contributed by 116-123 (AKTGTGKT). A DEAD box motif is present at residues 230 to 233 (DEAD). Positions 316-472 (ALSALIQEEH…KVPEQEAAIT (157 aa)) constitute a Helicase C-terminal domain.

This sequence belongs to the DEAD box helicase family. DDX18/HAS1 subfamily.

It is found in the mitochondrion matrix. It carries out the reaction ATP + H2O = ADP + phosphate + H(+). Functionally, ATP-dependent RNA helicase required for mitochondrial splicing of group I and II introns. Also required for efficient mitochondrial translation. This Phaeosphaeria nodorum (strain SN15 / ATCC MYA-4574 / FGSC 10173) (Glume blotch fungus) protein is ATP-dependent RNA helicase MSS116, mitochondrial (MSS116).